We begin with the raw amino-acid sequence, 98 residues long: Integration host factor subunit beta (98 aa).

This sequence belongs to the bacterial histone-like protein family. In terms of assembly, heterodimer of an alpha and a beta chain.

Its function is as follows. This protein is one of the two subunits of integration host factor, a specific DNA-binding protein that functions in genetic recombination as well as in transcriptional and translational control. The protein is Integration host factor subunit beta of Teredinibacter turnerae (strain ATCC 39867 / T7901).